The sequence spans 317 residues: 4-hydroxy-3-methylbut-2-enyl diphosphate reductase (317 aa).

Residue Cys-12 coordinates [4Fe-4S] cluster. (2E)-4-hydroxy-3-methylbut-2-enyl diphosphate contacts are provided by His-41 and His-74. His-41 and His-74 together coordinate dimethylallyl diphosphate. Residues His-41 and His-74 each contribute to the isopentenyl diphosphate site. A [4Fe-4S] cluster-binding site is contributed by Cys-97. His-125 is a (2E)-4-hydroxy-3-methylbut-2-enyl diphosphate binding site. Residue His-125 participates in dimethylallyl diphosphate binding. Position 125 (His-125) interacts with isopentenyl diphosphate. The active-site Proton donor is the Glu-127. Thr-168 contacts (2E)-4-hydroxy-3-methylbut-2-enyl diphosphate. Residue Cys-198 participates in [4Fe-4S] cluster binding. 4 residues coordinate (2E)-4-hydroxy-3-methylbut-2-enyl diphosphate: Ser-226, Ser-227, Asn-228, and Ser-270. Dimethylallyl diphosphate contacts are provided by Ser-226, Ser-227, Asn-228, and Ser-270. The isopentenyl diphosphate site is built by Ser-226, Ser-227, Asn-228, and Ser-270.

The protein belongs to the IspH family. In terms of assembly, homodimer. [4Fe-4S] cluster serves as cofactor.

The enzyme catalyses isopentenyl diphosphate + 2 oxidized [2Fe-2S]-[ferredoxin] + H2O = (2E)-4-hydroxy-3-methylbut-2-enyl diphosphate + 2 reduced [2Fe-2S]-[ferredoxin] + 2 H(+). It carries out the reaction dimethylallyl diphosphate + 2 oxidized [2Fe-2S]-[ferredoxin] + H2O = (2E)-4-hydroxy-3-methylbut-2-enyl diphosphate + 2 reduced [2Fe-2S]-[ferredoxin] + 2 H(+). Its pathway is isoprenoid biosynthesis; dimethylallyl diphosphate biosynthesis; dimethylallyl diphosphate from (2E)-4-hydroxy-3-methylbutenyl diphosphate: step 1/1. It functions in the pathway isoprenoid biosynthesis; isopentenyl diphosphate biosynthesis via DXP pathway; isopentenyl diphosphate from 1-deoxy-D-xylulose 5-phosphate: step 6/6. Catalyzes the conversion of 1-hydroxy-2-methyl-2-(E)-butenyl 4-diphosphate (HMBPP) into a mixture of isopentenyl diphosphate (IPP) and dimethylallyl diphosphate (DMAPP). Acts in the terminal step of the DOXP/MEP pathway for isoprenoid precursor biosynthesis. This Yersinia pestis bv. Antiqua (strain Antiqua) protein is 4-hydroxy-3-methylbut-2-enyl diphosphate reductase.